A 1941-amino-acid polypeptide reads, in one-letter code: WD repeat-containing protein 81 (1941 aa).

Positions 1–27 (MAQGSGGREGALRTPAGGWHSPPSPDM) are disordered. Positions 1 to 650 (MAQGSGGREG…TPCEASWTRD (650 aa)) are necessary and sufficient for the interaction with SQSTM1. Residues 337–614 (GQPTGQEELR…IPKLLVQTIQ (278 aa)) form the BEACH domain. Disordered stretches follow at residues 618 to 637 (GRED…GRPV), 694 to 718 (VASA…EEGR), 1022 to 1074 (SKDL…VSFH), 1097 to 1217 (PQEA…EGKE), 1523 to 1556 (PSSR…DGHS), and 1569 to 1602 (QIPN…DNAL). A compositionally biased stretch (polar residues) spans 1137-1146 (LRSGDSSQDL). Acidic residues predominate over residues 1151–1174 (GSEEEEEEEDSCVVLEEEEGEQEE). The span at 1586–1595 (SGVGGGGLGS) shows a compositional bias: gly residues. WD repeat units lie at residues 1639-1677 (IRLQ…LWPL), 1686-1724 (ETAP…VWDP), 1729-1769 (TLRT…FVDC), 1777-1815 (EFRL…LLDT), 1819-1856 (LVLR…VWKE), 1860-1896 (KPTH…VCSL), and 1902-1941 (QATT…RLLA).

It belongs to the WD repeat WDR81 family. Interacts with WDR91; involved in early to late endosome cargo transport. Interacts with BECN1; negatively regulates the PI3 kinase/PI3K activity associated with endosomal membranes. Interacts with SQSTM1; the interaction is direct and regulates the interaction of SQSTM1 with ubiquitinated proteins. Interacts with MAP1LC3C; recruits MAP1LC3C to ubiquitinated protein aggregates in the aggrephagy process. In terms of tissue distribution, widely expressed. In the brain, highest levels in cerebellum and corpus callosum.

It is found in the early endosome membrane. It localises to the late endosome membrane. The protein resides in the lysosome membrane. The protein localises to the cytoplasmic vesicle. Its subcellular location is the autophagosome membrane. It is found in the mitochondrion. It localises to the cytoplasm. The protein resides in the cytosol. In terms of biological role, functions as a negative regulator of the PI3 kinase/PI3K activity associated with endosomal membranes via BECN1, a core subunit of the PI3K complex. By modifying the phosphatidylinositol 3-phosphate/PtdInsP3 content of endosomal membranes may regulate endosome fusion, recycling, sorting and early to late endosome transport. It is for instance, required for the delivery of cargos like BST2/tetherin from early to late endosome and thereby participates indirectly to their degradation by the lysosome. May also play a role in aggrephagy, the macroautophagic degradation of ubiquitinated protein aggregates. In this process, may regulate the interaction of SQSTM1 with ubiquitinated proteins and also recruit MAP1LC3C. May also be involved in maintenance of normal mitochondrial structure and organization. The protein is WD repeat-containing protein 81 of Homo sapiens (Human).